We begin with the raw amino-acid sequence, 199 residues long: Auxin-responsive protein IAA1 (199 aa).

An EAR-like (transcriptional repression) motif is present at residues 25–29 (LTLRL). Positions 31–74 (GSLAAAAAPDPDRKRSSPSSSDAADAADNSSPLAAAADAPPAPK) are disordered. A compositionally biased stretch (low complexity) spans 47–69 (SPSSSDAADAADNSSPLAAAADA). One can recognise a PB1 domain in the interval 93-187 (AKFVKVAVDG…TCQRLRLMKS (95 aa)).

It belongs to the Aux/IAA family. In terms of assembly, homodimers and heterodimers. As to expression, highly expressed in flowers. Expressed at low levels in roots and shoots.

Its subcellular location is the nucleus. Aux/IAA proteins are short-lived transcriptional factors that function as repressors of early auxin response genes at low auxin concentrations. This chain is Auxin-responsive protein IAA1 (IAA1), found in Oryza sativa subsp. japonica (Rice).